Consider the following 341-residue polypeptide: UDP-glucose 4-epimerase (341 aa).

It belongs to the polysaccharide synthase family.

The enzyme catalyses UDP-alpha-D-glucose = UDP-alpha-D-galactose. In terms of biological role, epimerizes UDP-galactose to UDP-glucose. This is UDP-glucose 4-epimerase (capD) from Rickettsia canadensis (strain McKiel).